Here is a 631-residue protein sequence, read N- to C-terminus: Probable potassium transport system protein Kup 1 (631 aa).

The next 12 helical transmembrane spans lie at 17–37, 55–75, 101–121, 140–160, 166–186, 217–237, 249–269, 277–297, 338–358, 370–390, 395–415, and 420–440; these read LALGALGVVFGDIGTSPLYAL, LSLIFWSLIIVVSFKYLMIIF, PLFYIVAIFGAGLLLGDGMLT, LYPYVLPIASVILVLLFSLQA, IGYLFGPLILIWFITIAILGI, FLLGGIFLVVTGGEALFADIG, FFIALPCLLLNYFGQGANLIV, PFFMIAPPWFYLPLIIIATVA, IYVPQINFILFIGTMAFCLAF, IAVNLEMLLVDAMVAYAAVSI, TFNVIFLFGLFLLIDLAFLGA, and FITGGWVPIVLAFVIAFIMYS.

It belongs to the HAK/KUP transporter (TC 2.A.72) family.

The protein localises to the cell inner membrane. It catalyses the reaction K(+)(in) + H(+)(in) = K(+)(out) + H(+)(out). In terms of biological role, transport of potassium into the cell. Likely operates as a K(+):H(+) symporter. This chain is Probable potassium transport system protein Kup 1, found in Legionella pneumophila (strain Corby).